Consider the following 450-residue polypeptide: uncharacterized protein (450 aa).

Lys283 bears the N6-(pyridoxal phosphate)lysine mark.

Belongs to the class-III pyridoxal-phosphate-dependent aminotransferase family. The cofactor is pyridoxal 5'-phosphate.

Its function is as follows. Essential for glycerol catabolism. This is an uncharacterized protein from Bacillus subtilis (strain 168).